Reading from the N-terminus, the 275-residue chain is Trans-aconitate 2-methyltransferase (275 aa).

It belongs to the methyltransferase superfamily. Tam family.

The protein resides in the cytoplasm. The enzyme catalyses trans-aconitate + S-adenosyl-L-methionine = (E)-3-(methoxycarbonyl)pent-2-enedioate + S-adenosyl-L-homocysteine. Functionally, catalyzes the S-adenosylmethionine monomethyl esterification of trans-aconitate. This Pseudomonas aeruginosa (strain UCBPP-PA14) protein is Trans-aconitate 2-methyltransferase.